An 87-amino-acid chain; its full sequence is HssA/B-like protein 7 (87 aa).

The span at 1–22 (MSILSALTSISNPMKSTKSSVA) shows a compositional bias: polar residues. The disordered stretch occupies residues 1–23 (MSILSALTSISNPMKSTKSSVAN).

It belongs to the hssA/B family.

This chain is HssA/B-like protein 7 (hssl7), found in Dictyostelium discoideum (Social amoeba).